Consider the following 265-residue polypeptide: MLYTAEILTIGNELLTGRTVNTNASYIASRLTLMGFSVRRITAIRDELEEIASVIKEILGRSPAIVVVSGGLGPTYDDMTAEGIAKGLDRKLVMNEDALRELREKYQTRGLPLTQERLKMALLPEGAKPIRNEAGIAPGFTLNVNGTDIVATPGVPREMESVLESFLNHMLTRRPPVYYYEESFLVRGVMESTLAPHIKGIVKETGVYIKTHPKGHETSEPYLEVQIAYSGENPDRVKEIVRSVKERVKAVVRELGGTLDRVQNP.

This sequence belongs to the CinA family.

This Metallosphaera sedula (strain ATCC 51363 / DSM 5348 / JCM 9185 / NBRC 15509 / TH2) protein is Protein Msed_2121.